We begin with the raw amino-acid sequence, 227 residues long: Cytochrome c oxidase subunit 2 (227 aa).

Residues 1 to 14 lie on the Mitochondrial intermembrane side of the membrane; sequence MAYPFELGFQDATS. The helical transmembrane segment at 15–45 threads the bilayer; sequence PIMEELLHFHDHTLMIVFLISSLVLYIISLM. Over 46 to 59 the chain is Mitochondrial matrix; the sequence is LTTKLTHTSTMDAQ. The chain crosses the membrane as a helical span at residues 60-87; the sequence is EVETIWTILPAIILILIALPSLRILYMM. Over 88–227 the chain is Mitochondrial intermembrane; the sequence is DEINDPSLTV…HFENWSSSML (140 aa). The Cu cation site is built by H161, C196, E198, C200, H204, and M207. A Mg(2+)-binding site is contributed by E198.

This sequence belongs to the cytochrome c oxidase subunit 2 family. Component of the cytochrome c oxidase (complex IV, CIV), a multisubunit enzyme composed of 14 subunits. The complex is composed of a catalytic core of 3 subunits MT-CO1, MT-CO2 and MT-CO3, encoded in the mitochondrial DNA, and 11 supernumerary subunits COX4I, COX5A, COX5B, COX6A, COX6B, COX6C, COX7A, COX7B, COX7C, COX8 and NDUFA4, which are encoded in the nuclear genome. The complex exists as a monomer or a dimer and forms supercomplexes (SCs) in the inner mitochondrial membrane with NADH-ubiquinone oxidoreductase (complex I, CI) and ubiquinol-cytochrome c oxidoreductase (cytochrome b-c1 complex, complex III, CIII), resulting in different assemblies (supercomplex SCI(1)III(2)IV(1) and megacomplex MCI(2)III(2)IV(2)). Found in a complex with TMEM177, COA6, COX18, COX20, SCO1 and SCO2. Interacts with TMEM177 in a COX20-dependent manner. Interacts with COX20. Interacts with COX16. The cofactor is Cu cation.

Its subcellular location is the mitochondrion inner membrane. It catalyses the reaction 4 Fe(II)-[cytochrome c] + O2 + 8 H(+)(in) = 4 Fe(III)-[cytochrome c] + 2 H2O + 4 H(+)(out). Component of the cytochrome c oxidase, the last enzyme in the mitochondrial electron transport chain which drives oxidative phosphorylation. The respiratory chain contains 3 multisubunit complexes succinate dehydrogenase (complex II, CII), ubiquinol-cytochrome c oxidoreductase (cytochrome b-c1 complex, complex III, CIII) and cytochrome c oxidase (complex IV, CIV), that cooperate to transfer electrons derived from NADH and succinate to molecular oxygen, creating an electrochemical gradient over the inner membrane that drives transmembrane transport and the ATP synthase. Cytochrome c oxidase is the component of the respiratory chain that catalyzes the reduction of oxygen to water. Electrons originating from reduced cytochrome c in the intermembrane space (IMS) are transferred via the dinuclear copper A center (CU(A)) of subunit 2 and heme A of subunit 1 to the active site in subunit 1, a binuclear center (BNC) formed by heme A3 and copper B (CU(B)). The BNC reduces molecular oxygen to 2 water molecules using 4 electrons from cytochrome c in the IMS and 4 protons from the mitochondrial matrix. This is Cytochrome c oxidase subunit 2 (MT-CO2) from Tamias merriami (Merriam's chipmunk).